The chain runs to 528 residues: MDKANDYLKDYQPAKLVLATAGITAASILAYQAITDRDFKDKLNKKIFRSIKSMPGVSDIVKKERAKAKVELKKMFKTDVRNAHYTLPLKGIKHEDLIEEMKALAKVDESHWVDSKVSGCVYLGEKEHTKLLNEAYSLFSLSNPLHPSVFPSIRKFETESISMVSNMLNAHSKVVGSLTSGGTESIFMAVKAYRDFYKDRTDRPEIVVPVTIHAAFDKACEYLKIRIVHIDVDPVSYKVDMAAMKKAINKDTILVAGSAVNFPHGIIDPIDEIAKLAQQYDIGCHVDACLGGFILPFAEKLDYDIPVFDFRIPGVTSMSVDTHKFGYAAKGTSVVLFGNKKLRRAMYFVAPNWPGGIYASPTLPGSRPGGLVAACWASLVSMGNDGFLEKAKGVMETTKKIIKGLQSINGVKIIGDPKAMVVAFTCDNIFYVNDYMSKKGWHLNALQRPNSLHVCVTAKMIGMESLFIEDLKDSIKLVKDNSGSLPKDGTAPIYGSAHSVPDREMVGTILSDFIDELITPDYKPSQST.

The helical transmembrane segment at 13-35 (PAKLVLATAGITAASILAYQAIT) threads the bilayer. At K324 the chain carries N6-(pyridoxal phosphate)lysine.

The protein belongs to the group II decarboxylase family. Sphingosine-1-phosphate lyase subfamily. Pyridoxal 5'-phosphate serves as cofactor.

Its subcellular location is the endoplasmic reticulum membrane. The enzyme catalyses sphinganine 1-phosphate = hexadecanal + phosphoethanolamine. Its pathway is lipid metabolism; sphingolipid metabolism. In terms of biological role, cleaves phosphorylated sphingoid bases (PSBs), such as sphingosine-1-phosphate, into fatty aldehydes and phosphoethanolamine. Sphingosine-1-phosphate (S1P) probably acts intracellularly as a second messenger perhaps by promoting cell proliferation; the absence of S1P lyase increases its concentration. This leads to increased lateral pseudopod formation as well as defects in the efficiency of chemotaxis. Overexpression of S1P lyase causes decreased growth rates, entry into stationary phase at lower cell density and increased sensitivity to the antitumor agents cisplatin and carboplatin; these effects are more pronounced in cells that express more enzyme. This chain is Sphingosine-1-phosphate lyase (sglA), found in Dictyostelium discoideum (Social amoeba).